The chain runs to 433 residues: Anthranilate synthase component 1 (433 aa).

L-tryptophan contacts are provided by residues Ser29 and 219 to 221; that span reads PYT. 253-254 contacts chorismate; the sequence is GT. Glu280 lines the Mg(2+) pocket. Residues Tyr368, Arg388, 402 to 404, and Gly404 each bind chorismate; that span reads GAG. Position 417 (Glu417) interacts with Mg(2+).

It belongs to the anthranilate synthase component I family. In terms of assembly, heterotetramer consisting of two non-identical subunits: a beta subunit (TrpG) and a large alpha subunit (TrpE). It depends on Mg(2+) as a cofactor.

The enzyme catalyses chorismate + L-glutamine = anthranilate + pyruvate + L-glutamate + H(+). The protein operates within amino-acid biosynthesis; L-tryptophan biosynthesis; L-tryptophan from chorismate: step 1/5. Feedback inhibited by tryptophan. In terms of biological role, part of a heterotetrameric complex that catalyzes the two-step biosynthesis of anthranilate, an intermediate in the biosynthesis of L-tryptophan. In the first step, the glutamine-binding beta subunit (TrpG) of anthranilate synthase (AS) provides the glutamine amidotransferase activity which generates ammonia as a substrate that, along with chorismate, is used in the second step, catalyzed by the large alpha subunit of AS (TrpE) to produce anthranilate. In the absence of TrpG, TrpE can synthesize anthranilate directly from chorismate and high concentrations of ammonia. The sequence is that of Anthranilate synthase component 1 (trpE) from Thermococcus kodakarensis (strain ATCC BAA-918 / JCM 12380 / KOD1) (Pyrococcus kodakaraensis (strain KOD1)).